We begin with the raw amino-acid sequence, 373 residues long: Glycerol-3-phosphate dehydrogenase [NAD(+)] 2 (373 aa).

S15 carries the phosphoserine modification. NAD(+)-binding positions include 31 to 36, F123, K146, and A179; that span reads GSGNWG. K146 contributes to the substrate binding site. K236 (proton acceptor) is an active-site residue. R300 and Q329 together coordinate NAD(+). 300-301 contacts substrate; that stretch reads RN.

This sequence belongs to the NAD-dependent glycerol-3-phosphate dehydrogenase family.

It is found in the cytoplasm. The enzyme catalyses sn-glycerol 3-phosphate + NAD(+) = dihydroxyacetone phosphate + NADH + H(+). This chain is Glycerol-3-phosphate dehydrogenase [NAD(+)] 2 (gpd2), found in Schizosaccharomyces pombe (strain 972 / ATCC 24843) (Fission yeast).